The chain runs to 494 residues: Tripartite motif-containing protein 5 (494 aa).

The residue at position 2 (Ala2) is an N-acetylalanine. The RING-type zinc finger occupies 15-59 (CPICLELLTEPLSLDCGHSFCQACITANHKESMLHQGERSCPLCR). Residues 91–132 (QNVDHCARHGEKLLLFCEQDGNIICWLCERSQEHRGHNTFLV) form a B box-type zinc finger. Zn(2+) is bound by residues Cys96, His99, Cys118, and His124. The stretch at 132–223 (VEEVAQKYRE…RLVQSENDMV (92 aa)) forms a coiled coil. A required for interaction with GABARAP and for autophagy region spans residues 186–199 (FKQLRDILDCEESN). Residues 280–494 (PDLKRMLQVL…LPMTLCSPRS (215 aa)) form the B30.2/SPRY domain.

The protein belongs to the TRIM/RBCC family. In terms of assembly, can form homodimers and homotrimers. In addition to lower-order dimerization, also exhibits a higher-order multimerization and both low- and high-order multimerizations are essential for its restriction activity. Interacts with BTBD1 and BTBD2. Interacts with PSMC4, PSMC5, PSMD7 and HSPA8/HSC70. Interacts (via B30.2/SPRY domain) with HSPA1A/B. Interacts with PSMC2, MAP3K7/TAK1, TAB2 and TAB3. Interacts with SQSTM1. Interacts with TRIM6 and TRIM34. Interacts with ULK1 (phosphorylated form), GABARAP, GABARAPL1, GABARAPL2, MAP1LC3A, MAP1LC3C and BECN1. Post-translationally, degraded in a proteasome-independent fashion in the absence of viral infection but in a proteasome-dependent fashion following exposure to restriction sensitive virus. Autoubiquitinated in a RING finger- and UBE2D2-dependent manner. Monoubiquitinated by TRIM21. Deubiquitinated by Yersinia YopJ. Ubiquitination may not lead to proteasomal degradation.

It is found in the cytoplasm. The protein resides in the nucleus. The enzyme catalyses S-ubiquitinyl-[E2 ubiquitin-conjugating enzyme]-L-cysteine + [acceptor protein]-L-lysine = [E2 ubiquitin-conjugating enzyme]-L-cysteine + N(6)-ubiquitinyl-[acceptor protein]-L-lysine.. Its pathway is protein modification; protein ubiquitination. Its function is as follows. Capsid-specific restriction factor that prevents infection from non-host-adapted retroviruses. Blocks viral replication early in the life cycle, after viral entry but before reverse transcription. In addition to acting as a capsid-specific restriction factor, also acts as a pattern recognition receptor that activates innate immune signaling in response to the retroviral capsid lattice. Binding to the viral capsid triggers its E3 ubiquitin ligase activity, and in concert with the heterodimeric ubiquitin conjugating enzyme complex UBE2V1-UBE2N (also known as UBC13-UEV1A complex) generates 'Lys-63'-linked polyubiquitin chains, which in turn are catalysts in the autophosphorylation of the MAP3K7/TAK1 complex (includes TAK1, TAB2, and TAB3). Activation of the MAP3K7/TAK1 complex by autophosphorylation results in the induction and expression of NF-kappa-B and MAPK-responsive inflammatory genes, thereby leading to an innate immune response in the infected cell. Restricts infection by simian immunodeficiency virus (SIV-mac). Plays a role in regulating autophagy through activation of autophagy regulator BECN1 by causing its dissociation from its inhibitors BCL2 and TAB2. This chain is Tripartite motif-containing protein 5 (TRIM5), found in Saimiri sciureus (Common squirrel monkey).